The chain runs to 557 residues: Dihydroxy-acid dehydratase (557 aa).

Asp78 lines the Mg(2+) pocket. A [2Fe-2S] cluster-binding site is contributed by Cys119. Positions 120 and 121 each coordinate Mg(2+). At Lys121 the chain carries N6-carboxylysine. Cys192 contributes to the [2Fe-2S] cluster binding site. Residue Glu442 coordinates Mg(2+). The active-site Proton acceptor is Ser468.

Belongs to the IlvD/Edd family. Homodimer. [2Fe-2S] cluster serves as cofactor. It depends on Mg(2+) as a cofactor.

The enzyme catalyses (2R)-2,3-dihydroxy-3-methylbutanoate = 3-methyl-2-oxobutanoate + H2O. It carries out the reaction (2R,3R)-2,3-dihydroxy-3-methylpentanoate = (S)-3-methyl-2-oxopentanoate + H2O. It participates in amino-acid biosynthesis; L-isoleucine biosynthesis; L-isoleucine from 2-oxobutanoate: step 3/4. Its pathway is amino-acid biosynthesis; L-valine biosynthesis; L-valine from pyruvate: step 3/4. In terms of biological role, functions in the biosynthesis of branched-chain amino acids. Catalyzes the dehydration of (2R,3R)-2,3-dihydroxy-3-methylpentanoate (2,3-dihydroxy-3-methylvalerate) into 2-oxo-3-methylpentanoate (2-oxo-3-methylvalerate) and of (2R)-2,3-dihydroxy-3-methylbutanoate (2,3-dihydroxyisovalerate) into 2-oxo-3-methylbutanoate (2-oxoisovalerate), the penultimate precursor to L-isoleucine and L-valine, respectively. In Bacillus anthracis (strain A0248), this protein is Dihydroxy-acid dehydratase.